The chain runs to 375 residues: Alcohol dehydrogenase 1 (375 aa).

An N-acetylalanine modification is found at Ala-1. Zn(2+) is bound by residues Cys-46, His-68, Cys-98, Cys-101, Cys-104, Cys-112, and Cys-175. NAD(+) is bound by residues 200-205, Asp-224, Lys-229, 293-295, and Arg-370; these read GLGGVG and VGV.

Belongs to the zinc-containing alcohol dehydrogenase family. Class-I subfamily. Homodimer. It depends on Zn(2+) as a cofactor.

The protein resides in the cytoplasm. It carries out the reaction a primary alcohol + NAD(+) = an aldehyde + NADH + H(+). It catalyses the reaction a secondary alcohol + NAD(+) = a ketone + NADH + H(+). The chain is Alcohol dehydrogenase 1 from Columba livia (Rock dove).